A 314-amino-acid chain; its full sequence is Thymidylate synthase (314 aa).

Residues Arg21 and 176–177 (RR) contribute to the dUMP site. Cys196 serves as the catalytic Nucleophile. Residues 216 to 219 (RSAD), Asn227, and 257 to 259 (HLY) contribute to the dUMP site. Asp219 contributes to the (6R)-5,10-methylene-5,6,7,8-tetrahydrofolate binding site. Residue Ser313 participates in (6R)-5,10-methylene-5,6,7,8-tetrahydrofolate binding.

Belongs to the thymidylate synthase family. Bacterial-type ThyA subfamily. Homodimer.

It is found in the cytoplasm. It carries out the reaction dUMP + (6R)-5,10-methylene-5,6,7,8-tetrahydrofolate = 7,8-dihydrofolate + dTMP. Its pathway is pyrimidine metabolism; dTTP biosynthesis. Catalyzes the reductive methylation of 2'-deoxyuridine-5'-monophosphate (dUMP) to 2'-deoxythymidine-5'-monophosphate (dTMP) while utilizing 5,10-methylenetetrahydrofolate (mTHF) as the methyl donor and reductant in the reaction, yielding dihydrofolate (DHF) as a by-product. This enzymatic reaction provides an intracellular de novo source of dTMP, an essential precursor for DNA biosynthesis. This chain is Thymidylate synthase, found in Listeria monocytogenes serotype 4b (strain CLIP80459).